The primary structure comprises 325 residues: GTP 3',8-cyclase (325 aa).

A Radical SAM core domain is found at 4–219 (TYQREINYLR…DAISAKLGPL (216 aa)). A GTP-binding site is contributed by Arg-13. [4Fe-4S] cluster contacts are provided by Cys-20 and Cys-24. Tyr-26 is a binding site for S-adenosyl-L-methionine. Cys-27 provides a ligand contact to [4Fe-4S] cluster. Arg-63 contacts GTP. Gly-67 serves as a coordination point for S-adenosyl-L-methionine. A GTP-binding site is contributed by Thr-94. Ser-118 lines the S-adenosyl-L-methionine pocket. Lys-155 contacts GTP. Met-189 serves as a coordination point for S-adenosyl-L-methionine. [4Fe-4S] cluster-binding residues include Cys-254 and Cys-257. 259 to 261 (RLR) is a GTP binding site. Cys-271 serves as a coordination point for [4Fe-4S] cluster.

It belongs to the radical SAM superfamily. MoaA family. Monomer and homodimer. It depends on [4Fe-4S] cluster as a cofactor.

The catalysed reaction is GTP + AH2 + S-adenosyl-L-methionine = (8S)-3',8-cyclo-7,8-dihydroguanosine 5'-triphosphate + 5'-deoxyadenosine + L-methionine + A + H(+). It functions in the pathway cofactor biosynthesis; molybdopterin biosynthesis. Its function is as follows. Catalyzes the cyclization of GTP to (8S)-3',8-cyclo-7,8-dihydroguanosine 5'-triphosphate. The polypeptide is GTP 3',8-cyclase (Pelotomaculum thermopropionicum (strain DSM 13744 / JCM 10971 / SI)).